We begin with the raw amino-acid sequence, 261 residues long: High-affinity zinc uptake system membrane protein ZnuB (261 aa).

The Periplasmic segment spans residues 1–7; the sequence is MIELLFP. Residues 8–28 traverse the membrane as a helical segment; it reads GWLAGIMLACAAGPLGSFVVW. Residues 29 to 53 lie on the Cytoplasmic side of the membrane; it reads RRMSYFGDTLAHASLLGVAFGLLLD. The chain crosses the membrane as a helical span at residues 54 to 74; that stretch reads VNPFYAVIAVTLLLAGGLVWL. Residues 75–83 lie on the Periplasmic side of the membrane; that stretch reads EKRPQLAID. The helical transmembrane segment at 84-104 threads the bilayer; that stretch reads TLLGIMAHSALSLGLVVVSLM. The Cytoplasmic portion of the chain corresponds to 105–121; that stretch reads SNIRVDLMAYLFGDLLA. The chain crosses the membrane as a helical span at residues 122–142; that stretch reads VTPEDLISIAIGVVIVVAILF. Over 143–177 the chain is Periplasmic; sequence WQWRNLLSMTISPDLAFVDGVKLQRVKLLLMLVTA. A helical transmembrane segment spans residues 178 to 198; sequence LTIGVAMKFVGALIITSLLII. Topologically, residues 199-213 are cytoplasmic; it reads PAATARRFARTPEQM. The chain crosses the membrane as a helical span at residues 214–234; the sequence is AGVAVLVGMVAVTGGLTFSAV. A topological domain (periplasmic) is located at residue Tyr235. A helical transmembrane segment spans residues 236–256; the sequence is DTPAGPSVVLCAALLFILSMM. Topologically, residues 257–261 are cytoplasmic; the sequence is KKQAS.

It belongs to the ABC-3 integral membrane protein family.

It is found in the cell inner membrane. Involved in the high-affinity zinc uptake transport system. This is High-affinity zinc uptake system membrane protein ZnuB (znuB) from Escherichia coli (strain K12).